A 197-amino-acid chain; its full sequence is Dephospho-CoA kinase (197 aa).

One can recognise a DPCK domain in the interval 3–197 (VLGLTGSIGL…IDELRGQRGS (195 aa)). 11-16 (GLGKST) contacts ATP.

Belongs to the CoaE family.

The protein resides in the cytoplasm. It catalyses the reaction 3'-dephospho-CoA + ATP = ADP + CoA + H(+). It functions in the pathway cofactor biosynthesis; coenzyme A biosynthesis; CoA from (R)-pantothenate: step 5/5. Catalyzes the phosphorylation of the 3'-hydroxyl group of dephosphocoenzyme A to form coenzyme A. The protein is Dephospho-CoA kinase of Mesorhizobium japonicum (strain LMG 29417 / CECT 9101 / MAFF 303099) (Mesorhizobium loti (strain MAFF 303099)).